The primary structure comprises 81 residues: Large ribosomal subunit protein bL31B (81 aa).

This sequence belongs to the bacterial ribosomal protein bL31 family. Type B subfamily. Part of the 50S ribosomal subunit.

In Pediococcus pentosaceus (strain ATCC 25745 / CCUG 21536 / LMG 10740 / 183-1w), this protein is Large ribosomal subunit protein bL31B.